The chain runs to 301 residues: MADFVSTSPFGPVLTAMVTPFNADGGVDYGVAEKLADHLITHGSDGLVVCGTTGESPTLSWEEEHELFRVVKQTVGDRGSVIAGTGSNCTREAMEATQIAAKLGVDGSLQVVPYYNKPPQEGLLAHFQAIANCAPELPLMLYNIPGRTGQSLAPETVYRLAEVENIVAIKEATGSLEQASLIRAHTPDDFAIYAGDDVLTLPLLAVGGAGVVSVASHLVGDRLQAMVQHFAQGATAQALEIHLQLIPLFKILFCATNPIPVKTALGLQGWPVGSFRPPLCALSPGHTEQLRDVLRDLALLP.

Threonine 53 contributes to the pyruvate binding site. Tyrosine 142 acts as the Proton donor/acceptor in catalysis. Lysine 170 serves as the catalytic Schiff-base intermediate with substrate. Position 212 (valine 212) interacts with pyruvate.

The protein belongs to the DapA family. Homotetramer; dimer of dimers.

The protein localises to the cytoplasm. It catalyses the reaction L-aspartate 4-semialdehyde + pyruvate = (2S,4S)-4-hydroxy-2,3,4,5-tetrahydrodipicolinate + H2O + H(+). It participates in amino-acid biosynthesis; L-lysine biosynthesis via DAP pathway; (S)-tetrahydrodipicolinate from L-aspartate: step 3/4. Its function is as follows. Catalyzes the condensation of (S)-aspartate-beta-semialdehyde [(S)-ASA] and pyruvate to 4-hydroxy-tetrahydrodipicolinate (HTPA). This chain is 4-hydroxy-tetrahydrodipicolinate synthase, found in Synechocystis sp. (strain ATCC 27184 / PCC 6803 / Kazusa).